Here is a 362-residue protein sequence, read N- to C-terminus: S-adenosylmethionine decarboxylase proenzyme (362 aa).

Active-site residues include Glu13 and Glu16. The Schiff-base intermediate with substrate; via pyruvic acid role is filled by Ser73. Ser73 is modified (pyruvic acid (Ser); by autocatalysis). Cys87 acts as the Proton donor; for catalytic activity in catalysis. Residues Ser236 and His249 each act as proton acceptor; for processing activity in the active site.

This sequence belongs to the eukaryotic AdoMetDC family. Requires pyruvate as cofactor. Post-translationally, is synthesized initially as an inactive proenzyme. Formation of the active enzyme involves a self-maturation process in which the active site pyruvoyl group is generated from an internal serine residue via an autocatalytic post-translational modification. Two non-identical subunits are generated from the proenzyme in this reaction, and the pyruvate is formed at the N-terminus of the alpha chain, which is derived from the carboxyl end of the proenzyme. The post-translation cleavage follows an unusual pathway, termed non-hydrolytic serinolysis, in which the side chain hydroxyl group of the serine supplies its oxygen atom to form the C-terminus of the beta chain, while the remainder of the serine residue undergoes an oxidative deamination to produce ammonia and the pyruvoyl group blocking the N-terminus of the alpha chain.

It carries out the reaction S-adenosyl-L-methionine + H(+) = S-adenosyl 3-(methylsulfanyl)propylamine + CO2. It functions in the pathway amine and polyamine biosynthesis; S-adenosylmethioninamine biosynthesis; S-adenosylmethioninamine from S-adenosyl-L-methionine: step 1/1. The polypeptide is S-adenosylmethionine decarboxylase proenzyme (SAMDC) (Datura stramonium (Jimsonweed)).